Here is a 212-residue protein sequence, read N- to C-terminus: Large ribosomal subunit protein uL3 (212 aa).

Residues 129–156 are disordered; the sequence is RRGPMGHGSKNHRAPGSTGAGTTPGRIY. Low complexity predominate over residues 142-153; sequence APGSTGAGTTPG.

This sequence belongs to the universal ribosomal protein uL3 family. Part of the 50S ribosomal subunit. Forms a cluster with proteins L14 and L19.

Its function is as follows. One of the primary rRNA binding proteins, it binds directly near the 3'-end of the 23S rRNA, where it nucleates assembly of the 50S subunit. In Acaryochloris marina (strain MBIC 11017), this protein is Large ribosomal subunit protein uL3.